Consider the following 349-residue polypeptide: [LysW]-L-2-aminoadipate/[LysW]-L-glutamate phosphate reductase (349 aa).

10–13 (SGYT) contacts NADP(+). The active site involves C150. N316 provides a ligand contact to NADP(+).

This sequence belongs to the NAGSA dehydrogenase family. Type 1 subfamily. LysY sub-subfamily.

It localises to the cytoplasm. It carries out the reaction [amino-group carrier protein]-C-terminal-N-(1-carboxy-5-oxopentan-1-yl)-L-glutamine + phosphate + NADP(+) = [amino-group carrier protein]-C-terminal-N-(1-carboxy-5-phosphooxy-5-oxopentan-1-yl)-L-glutamine + NADPH + H(+). It catalyses the reaction [amino-group carrier protein]-C-terminal-gamma-(L-glutamyl-5-semialdehyde)-L-glutamate + phosphate + NADP(+) = [amino-group carrier protein]-C-terminal-gamma-(5-phospho-L-glutamyl)-L-glutamate + NADPH + H(+). The protein operates within amino-acid biosynthesis; L-lysine biosynthesis via AAA pathway; L-lysine from L-alpha-aminoadipate (Thermus route): step 3/5. It participates in amino-acid biosynthesis; L-arginine biosynthesis. In terms of biological role, involved in both the arginine and lysine biosynthetic pathways. The sequence is that of [LysW]-L-2-aminoadipate/[LysW]-L-glutamate phosphate reductase from Sulfurisphaera tokodaii (strain DSM 16993 / JCM 10545 / NBRC 100140 / 7) (Sulfolobus tokodaii).